We begin with the raw amino-acid sequence, 353 residues long: Thrombopoietin (353 aa).

A signal peptide spans 1–21 (MELTELLLVVMLLLTARLTLS). O-linked (GalNAc...) serine glycosylation occurs at Ser22. 2 disulfides stabilise this stretch: Cys28/Cys172 and Cys50/Cys106. Thr58, Thr131, Thr179, and Thr180 each carry an O-linked (GalNAc...) threonine glycan. Ser184 carries an O-linked (GalNAc...) serine glycan. 2 N-linked (GlcNAc...) (complex) asparagine glycosylation sites follow: Asn197 and Asn206. Thr213 carries an O-linked (GalNAc...) threonine glycan. Asn234 and Asn255 each carry an N-linked (GlcNAc...) (complex) asparagine glycan. A disordered region spans residues 257–353 (TRGLFPGPSR…THSQNLSQEG (97 aa)). The O-linked (GalNAc...) serine glycan is linked to Ser265. A compositionally biased stretch (polar residues) spans 275–304 (SSGTSDTGSLPPNLQPGYSPSPTHPPTGQY). A compositionally biased stretch (pro residues) spans 324–335 (LPDPSAPTPTPT). N-linked (GlcNAc...) asparagine glycosylation is found at Asn340 and Asn348. Residues 343–353 (YTHSQNLSQEG) are compositionally biased toward polar residues.

It belongs to the EPO/TPO family. Interacts with MPL/TPOR.

It is found in the secreted. Lineage-specific cytokine affecting the proliferation and maturation of megakaryocytes from their committed progenitor cells. It acts at a late stage of megakaryocyte development. It may be the major physiological regulator of circulating platelets. The sequence is that of Thrombopoietin (THPO) from Homo sapiens (Human).